A 110-amino-acid polypeptide reads, in one-letter code: Class I hydrophobin Po.HYD (110 aa).

The first 27 residues, 1–27, serve as a signal peptide directing secretion; it reads MFSKATLFFTTVSRYRDTQAPIPTGQT. Disulfide bonds link cysteine 35/cysteine 91, cysteine 42/cysteine 85, cysteine 43/cysteine 75, and cysteine 92/cysteine 105.

Belongs to the fungal hydrophobin family. As to quaternary structure, self-assembles to form functional amyloid fibrils called rodlets. Self-assembly into fibrillar rodlets occurs spontaneously at hydrophobic:hydrophilic interfaces and the rodlets further associate laterally to form amphipathic monolayers.

It is found in the secreted. Its subcellular location is the cell wall. In terms of biological role, aerial growth, conidiation, and dispersal of filamentous fungi in the environment rely upon a capability of their secreting small amphipathic proteins called hydrophobins (HPBs) with low sequence identity. Class I can self-assemble into an outermost layer of rodlet bundles on aerial cell surfaces, conferring cellular hydrophobicity that supports fungal growth, development and dispersal; whereas Class II form highly ordered films at water-air interfaces through intermolecular interactions but contribute nothing to the rodlet structure. The sequence is that of Class I hydrophobin Po.HYD from Pleurotus ostreatus (Oyster mushroom).